Reading from the N-terminus, the 230-residue chain is Cytidylate kinase (230 aa).

12–20 (GPSGAGKGT) serves as a coordination point for ATP.

This sequence belongs to the cytidylate kinase family. Type 1 subfamily.

It is found in the cytoplasm. It carries out the reaction CMP + ATP = CDP + ADP. It catalyses the reaction dCMP + ATP = dCDP + ADP. This chain is Cytidylate kinase, found in Shewanella halifaxensis (strain HAW-EB4).